The sequence spans 620 residues: Proline--tRNA ligase (620 aa).

Belongs to the class-II aminoacyl-tRNA synthetase family. ProS type 1 subfamily. In terms of assembly, homodimer.

It localises to the cytoplasm. The enzyme catalyses tRNA(Pro) + L-proline + ATP = L-prolyl-tRNA(Pro) + AMP + diphosphate. Functionally, catalyzes the attachment of proline to tRNA(Pro) in a two-step reaction: proline is first activated by ATP to form Pro-AMP and then transferred to the acceptor end of tRNA(Pro). As ProRS can inadvertently accommodate and process non-cognate amino acids such as alanine and cysteine, to avoid such errors it has two additional distinct editing activities against alanine. One activity is designated as 'pretransfer' editing and involves the tRNA(Pro)-independent hydrolysis of activated Ala-AMP. The other activity is designated 'posttransfer' editing and involves deacylation of mischarged Ala-tRNA(Pro). The misacylated Cys-tRNA(Pro) is not edited by ProRS. This chain is Proline--tRNA ligase, found in Streptococcus suis (strain 98HAH33).